The sequence spans 79 residues: Small ribosomal subunit protein bS21 (79 aa).

2 stretches are compositionally biased toward basic residues: residues 47-59 and 69-79; these read RKQA…HLKK and GVGHRRKKSTT. The disordered stretch occupies residues 47–79; it reads RKQAAAVKRHLKKISRDVSSRRGVGHRRKKSTT.

The protein belongs to the bacterial ribosomal protein bS21 family.

In Legionella pneumophila (strain Paris), this protein is Small ribosomal subunit protein bS21.